A 152-amino-acid polypeptide reads, in one-letter code: UPF0266 membrane protein YobD (152 aa).

Transmembrane regions (helical) follow at residues 6–26 (LVLI…QFIM), 45–65 (VDSV…VTSH), and 67–87 (AQMT…IFWI).

It belongs to the UPF0266 family.

It is found in the cell inner membrane. This is UPF0266 membrane protein YobD from Salmonella arizonae (strain ATCC BAA-731 / CDC346-86 / RSK2980).